Reading from the N-terminus, the 310-residue chain is UDP-N-acetylenolpyruvoylglucosamine reductase (310 aa).

An FAD-binding PCMH-type domain is found at 34-213; it reads RAGGNAEVLF…LRRMNEITSS (180 aa). R178 is a catalytic residue. The active-site Proton donor is the S227. Residue E297 is part of the active site.

It belongs to the MurB family. FAD is required as a cofactor.

The protein localises to the cytoplasm. It carries out the reaction UDP-N-acetyl-alpha-D-muramate + NADP(+) = UDP-N-acetyl-3-O-(1-carboxyvinyl)-alpha-D-glucosamine + NADPH + H(+). Its pathway is cell wall biogenesis; peptidoglycan biosynthesis. Its function is as follows. Cell wall formation. This Parvibaculum lavamentivorans (strain DS-1 / DSM 13023 / NCIMB 13966) protein is UDP-N-acetylenolpyruvoylglucosamine reductase.